A 62-amino-acid chain; its full sequence is Mu-conotoxin Lt5d (62 aa).

The signal sequence occupies residues 1 to 22; sequence MRCLPVFIILLLLIPSAPSVDA. A propeptide spanning residues 23–48 is cleaved from the precursor; the sequence is QPTTKDDVPLASLHDNAKRALQMFWN.

It belongs to the conotoxin T superfamily. Contains 2 disulfide bonds that can be either 'C1-C3, C2-C4' or 'C1-C4, C2-C3', since these disulfide connectivities have been observed for conotoxins with cysteine framework V (for examples, see AC P0DQQ7 and AC P81755). As to expression, expressed by the venom duct.

Its subcellular location is the secreted. Functionally, mu-conotoxins block voltage-gated sodium channels (Nav). This toxin inhibits tetrodotoxin(TTX)-sensitive sodium channels, but does not affect TTX-resistant sodium channels. Reduces the amplitude of currents without changing the activation and inactivation kinetics of currents. In Conus litteratus (Lettered cone), this protein is Mu-conotoxin Lt5d.